A 106-amino-acid chain; its full sequence is Transcription initiation factor IIA subunit 2 (106 aa).

The protein belongs to the TFIIA subunit 2 family. TFIIA is a heterodimer of the large unprocessed subunit 1 and a small subunit gamma. It was originally believed to be a heterotrimer of an alpha, a beta and a gamma subunit.

It is found in the nucleus. TFIIA is a component of the transcription machinery of RNA polymerase II and plays an important role in transcriptional activation. TFIIA in a complex with TBP mediates transcriptional activity. Protein involved in the resistance to X.oryzae. The sequence is that of Transcription initiation factor IIA subunit 2 (TFIIAy) from Oryza sativa subsp. indica (Rice).